The chain runs to 188 residues: Pyridoxal 5'-phosphate synthase subunit PdxT (188 aa).

Position 46–48 (46–48) interacts with L-glutamine; it reads GES. Cys78 functions as the Nucleophile in the catalytic mechanism. L-glutamine-binding positions include Arg105 and 134-135; that span reads IR. Residues His170 and Glu172 each act as charge relay system in the active site.

Belongs to the glutaminase PdxT/SNO family. In terms of assembly, in the presence of PdxS, forms a dodecamer of heterodimers. Only shows activity in the heterodimer.

It carries out the reaction aldehydo-D-ribose 5-phosphate + D-glyceraldehyde 3-phosphate + L-glutamine = pyridoxal 5'-phosphate + L-glutamate + phosphate + 3 H2O + H(+). The enzyme catalyses L-glutamine + H2O = L-glutamate + NH4(+). Its pathway is cofactor biosynthesis; pyridoxal 5'-phosphate biosynthesis. Functionally, catalyzes the hydrolysis of glutamine to glutamate and ammonia as part of the biosynthesis of pyridoxal 5'-phosphate. The resulting ammonia molecule is channeled to the active site of PdxS. In Thermotoga maritima (strain ATCC 43589 / DSM 3109 / JCM 10099 / NBRC 100826 / MSB8), this protein is Pyridoxal 5'-phosphate synthase subunit PdxT.